We begin with the raw amino-acid sequence, 1615 residues long: DNA-directed RNA polymerase I subunit rpa1 (1615 aa).

Zn(2+) is bound by residues Cys-65, Cys-68, Cys-75, and His-78. A disordered region spans residues 155 to 181; the sequence is GKSNEEGEEVMESDESDSDKMDTDENK. The span at 160–171 shows a compositional bias: acidic residues; that stretch reads EGEEVMESDESD. A compositionally biased stretch (basic and acidic residues) spans 172–181; that stretch reads SDKMDTDENK. Mg(2+) contacts are provided by Asp-593, Asp-595, and Asp-597. Positions 955-967 are bridging helix; sequence PQDYFFHCMAGRE. The segment covering 1305 to 1316 has biased composition (acidic residues); that stretch reads DSLTINDDDAPA. The interval 1305–1411 is disordered; the sequence is DSLTINDDDA…NSRSSNSFSD (107 aa). Over residues 1317 to 1336 the composition is skewed to low complexity; the sequence is NDDTTNNDENTSQQQPSSQN. Positions 1366 to 1399 are enriched in acidic residues; that stretch reads EDGEEEAEEKDSDEGESEAEESDDKSDVDSDSDE. A compositionally biased stretch (low complexity) spans 1400–1411; it reads ISNSRSSNSFSD.

This sequence belongs to the RNA polymerase beta' chain family. As to quaternary structure, component of the RNA polymerase I (Pol I) complex consisting of at least 13 subunits.

It localises to the nucleus. The enzyme catalyses RNA(n) + a ribonucleoside 5'-triphosphate = RNA(n+1) + diphosphate. DNA-dependent RNA polymerase catalyzes the transcription of DNA into RNA using the four ribonucleoside triphosphates as substrates. Largest and catalytic core component of RNA polymerase I which synthesizes ribosomal RNA precursors. Forms the polymerase active center together with the second largest subunit. A single stranded DNA template strand of the promoter is positioned within the central active site cleft of Pol I. A bridging helix emanates from RPA1 and crosses the cleft near the catalytic site and is thought to promote translocation of Pol I by acting as a ratchet that moves the RNA-DNA hybrid through the active site by switching from straight to bent conformations at each step of nucleotide addition. The polypeptide is DNA-directed RNA polymerase I subunit rpa1 (polr1a) (Dictyostelium discoideum (Social amoeba)).